We begin with the raw amino-acid sequence, 431 residues long: 2-oxoisovalerate dehydrogenase subunit alpha, mitochondrial (431 aa).

140–142 (QYR) is a thiamine diphosphate binding site. 3 residues coordinate K(+): Ser189, Thr194, and Gln195.

It belongs to the BCKDHA family. It depends on thiamine diphosphate as a cofactor.

It is found in the mitochondrion matrix. It carries out the reaction N(6)-[(R)-lipoyl]-L-lysyl-[protein] + 3-methyl-2-oxobutanoate + H(+) = N(6)-[(R)-S(8)-2-methylpropanoyldihydrolipoyl]-L-lysyl-[protein] + CO2. Its pathway is lipid metabolism; fatty acid biosynthesis. The branched-chain alpha-keto dehydrogenase complex catalyzes the overall conversion of alpha-keto acids to acyl-CoA and CO(2). It contains multiple copies of three enzymatic components: branched-chain alpha-keto acid decarboxylase (E1), lipoamide acyltransferase (E2) and lipoamide dehydrogenase (E3). Required for the production of the monomethyl branched-chain fatty acids (mmBCFAs) isopentadecanoate (C15iso) and isoheptadecanoate (C17iso). This Caenorhabditis elegans protein is 2-oxoisovalerate dehydrogenase subunit alpha, mitochondrial.